A 156-amino-acid polypeptide reads, in one-letter code: CD-NTase-associated protein 8 (156 aa).

Belongs to the bacterial HORMA family. HORMA3 subfamily. As to quaternary structure, interacts with Cap7 (also called HORMA2) and CdnC; forms CdnD:Cap7:Cap8 (also called CdnD:HORMA2:HORMA3) complexes with stoichiometries of 1:1:1 and 2:1:1.

Its function is as follows. CBASS (cyclic oligonucleotide-based antiphage signaling system) provides immunity against bacteriophage. The CD-NTase protein synthesizes cyclic nucleotides in response to infection; these serve as specific second messenger signals. The signals activate a diverse range of effectors, leading to bacterial cell death and thus abortive phage infection. A type III-C(AAA) CBASS system. A member of the CBASS system in this bacteria. It does not seem to bind a closure peptide, its exact function is unknown. The chain is CD-NTase-associated protein 8 from Pseudomonas aeruginosa.